Consider the following 124-residue polypeptide: Small ribosomal subunit protein eS6 (124 aa).

This sequence belongs to the eukaryotic ribosomal protein eS6 family.

The protein is Small ribosomal subunit protein eS6 of Methanococcus maripaludis (strain C7 / ATCC BAA-1331).